Consider the following 185-residue polypeptide: Peptidyl-tRNA hydrolase (185 aa).

Residue Y14 coordinates tRNA. The active-site Proton acceptor is H19. Residues Y64, N66, and N112 each coordinate tRNA.

It belongs to the PTH family. Monomer.

The protein resides in the cytoplasm. It catalyses the reaction an N-acyl-L-alpha-aminoacyl-tRNA + H2O = an N-acyl-L-amino acid + a tRNA + H(+). Its function is as follows. Hydrolyzes ribosome-free peptidyl-tRNAs (with 1 or more amino acids incorporated), which drop off the ribosome during protein synthesis, or as a result of ribosome stalling. Functionally, catalyzes the release of premature peptidyl moieties from peptidyl-tRNA molecules trapped in stalled 50S ribosomal subunits, and thus maintains levels of free tRNAs and 50S ribosomes. The protein is Peptidyl-tRNA hydrolase of Lactobacillus delbrueckii subsp. bulgaricus (strain ATCC 11842 / DSM 20081 / BCRC 10696 / JCM 1002 / NBRC 13953 / NCIMB 11778 / NCTC 12712 / WDCM 00102 / Lb 14).